We begin with the raw amino-acid sequence, 210 residues long: Na(+)-translocating NADH-quinone reductase subunit D (210 aa).

5 helical membrane-spanning segments follow: residues 42–62, 72–92, 103–123, 131–151, and 178–198; these read FVMTLAVTFVTALSNFSVSLI, IIVQMAIIASLVIVVDQVLKA, VFVGLIITNCIVMGRAEAFAM, LIDGIGNGLGYGFVLITVGFF, and NGLMLLAPSAFFLIGFLIWVI.

Belongs to the NqrDE/RnfAE family. As to quaternary structure, composed of six subunits; NqrA, NqrB, NqrC, NqrD, NqrE and NqrF.

The protein localises to the cell inner membrane. The enzyme catalyses a ubiquinone + n Na(+)(in) + NADH + H(+) = a ubiquinol + n Na(+)(out) + NAD(+). NQR complex catalyzes the reduction of ubiquinone-1 to ubiquinol by two successive reactions, coupled with the transport of Na(+) ions from the cytoplasm to the periplasm. NqrA to NqrE are probably involved in the second step, the conversion of ubisemiquinone to ubiquinol. This chain is Na(+)-translocating NADH-quinone reductase subunit D, found in Vibrio parahaemolyticus serotype O3:K6 (strain RIMD 2210633).